The sequence spans 81 residues: Small ribosomal subunit protein bS18A (81 aa).

The protein belongs to the bacterial ribosomal protein bS18 family. In terms of assembly, part of the 30S ribosomal subunit. Forms a tight heterodimer with protein bS6.

Functionally, binds as a heterodimer with protein bS6 to the central domain of the 16S rRNA, where it helps stabilize the platform of the 30S subunit. This Saccharopolyspora erythraea (strain ATCC 11635 / DSM 40517 / JCM 4748 / NBRC 13426 / NCIMB 8594 / NRRL 2338) protein is Small ribosomal subunit protein bS18A.